Here is a 438-residue protein sequence, read N- to C-terminus: DEAD-box ATP-dependent RNA helicase CshB (438 aa).

The Q motif signature appears at 4-32 (TKFELYELKPFIIDAVHRLGFYEPTDIQK). Residues 35-208 (IPAVLKKESV…KKYMENPKYA (174 aa)) enclose the Helicase ATP-binding domain. 48 to 55 (SQTGTGKT) is an ATP binding site. Positions 156-159 (DEAD) match the DEAD box motif. The region spanning 235 to 385 (LLFDIMSHLN…EWKKGDDRQR (151 aa)) is the Helicase C-terminal domain. Residues 380-438 (GDDRQRRKKRKKTPNEADEIAHRLVKKPKKVKPGYKKKMSYEMEKIKKKQRRNQSKKRK) form a disordered region. A compositionally biased stretch (basic and acidic residues) spans 392-401 (TPNEADEIAH). Basic residues-rich tracts occupy residues 402 to 417 (RLVK…YKKK) and 425 to 438 (IKKK…KKRK).

The protein belongs to the DEAD box helicase family. In terms of assembly, interacts with CspB when cells are transcriptionally active. May interact with RNA helicases CshA and DbpA (DeaD), may be a component of a possible RNA degradosome complex composed of rny, rnja, rnjb, pnp, pfkA and eno (although rnjA and rnjB's presence is unclear). Specifically interacts with pnp and rny.

Its subcellular location is the cytoplasm. The protein localises to the nucleoid. It catalyses the reaction ATP + H2O = ADP + phosphate + H(+). Functionally, DEAD-box RNA helicase that plays a role in 70S ribosome assembly. May work in conjunction with the cold shock proteins to ensure proper initiation of transcription at low and optimal temperatures. The sequence is that of DEAD-box ATP-dependent RNA helicase CshB from Bacillus subtilis (strain 168).